The chain runs to 402 residues: Beta-peptidyl aminopeptidase BapA (402 aa).

A signal peptide spans 1–29; it reads MTSTQRLWSGALPLLTALIVSIAATASLA. Catalysis depends on Ser279, which acts as the Nucleophile. Active-site proton donor/acceptor residues include Ser317 and Glu319.

The protein belongs to the peptidase S58 family. Heterooctamer of 4 heterodimers ((alpha:beta)4); each heterodimer is composed of an alpha subunit and a beta subunit processed from the same precursor. In terms of processing, autoproteolytic processing to generate the alpha and beta subunit is required for self-activation and is proposed to use a similar mechanism as substrate cleavage.

Its subcellular location is the periplasm. The catalysed reaction is Cleaves N-terminal beta-homoamino acids from peptides composed of 2 to 6 amino acids.. Inhibited by AEBSF (4-(2-aminoethyl)benzenesulfonyl fluoride, Pefabloc SC), ampicillin and AMP(hyd) (ampillicin-derived penicilloic acid). Its function is as follows. Beta-aminopeptidase that can cleave synthetic beta-peptides which consist of backbone-elongated beta-amino acid residues that are not processed by common proteolytic enzymes. Can cleave the beta-peptides beta-homoVal-beta-homoAla-beta-homoLeu and beta-homoAla-beta-homoLeu. Requires a beta-amino acid at the N-terminus of peptide substrates and cleaves the peptide bond between the N-terminal beta-amino acid and the amino acid at the second position of tripeptidic substrates of the general structure H-betahXaa-Ile-betahTyr-OH according to the following preferences with regard to the side chain of the N-terminal beta-amino acid: aliphatic and aromatic &gt; OH-containing &gt; hydrogen, basic and polar. This chain is Beta-peptidyl aminopeptidase BapA, found in Sphingosinicella xenopeptidilytica.